The chain runs to 296 residues: Ribosomal protein L11 methyltransferase (296 aa).

S-adenosyl-L-methionine is bound by residues Thr151, Gly172, Asp194, and Asn233.

This sequence belongs to the methyltransferase superfamily. PrmA family.

It is found in the cytoplasm. The enzyme catalyses L-lysyl-[protein] + 3 S-adenosyl-L-methionine = N(6),N(6),N(6)-trimethyl-L-lysyl-[protein] + 3 S-adenosyl-L-homocysteine + 3 H(+). Functionally, methylates ribosomal protein L11. In Dechloromonas aromatica (strain RCB), this protein is Ribosomal protein L11 methyltransferase.